We begin with the raw amino-acid sequence, 117 residues long: Movement and RNA silencing protein (117 aa).

A helical membrane pass occupies residues 15-35 (FLFFGAIFIAITILYILLVLL). The disordered stretch occupies residues 83 to 117 (RDQEPAVIPHVSQVIPSQPNRRDDQGRRGNAGPMF).

It localises to the host cell membrane. Functionally, transports viral genome to neighboring plant cells directly through plasmosdesmata, without any budding. The movement protein allows efficient cell to cell propagation, by bypassing the host cell wall barrier. Begomovirus genome is shuttled out of nucleus by Nuclear shuttle protein (NSP) and the movement protein transports the DNA-NSP complex to cell plasmodesmata and facilitates further movement across the cell wall. Acts as a suppressor of RNA-mediated gene silencing, also known as post-transcriptional gene silencing (PTGS), a mechanism of plant viral defense that limits the accumulation of viral RNAs. The polypeptide is Movement and RNA silencing protein (DNA-M) (Banana bunchy top virus (isolate Autralia) (BBTV)).